The following is a 458-amino-acid chain: Maturase-like protein 1 (458 aa).

It to group II intron maturases.

The protein localises to the plastid. It localises to the chloroplast. In terms of biological role, could be required for group III intron excision. The chain is Maturase-like protein 1 (mat1) from Euglena gracilis.